Consider the following 146-residue polypeptide: Hemoglobin subunit beta (146 aa).

The Globin domain occupies 2-146 (QWTAEEKQLI…VAHALARKYH (145 aa)). Heme b contacts are provided by His-63 and His-92.

Belongs to the globin family. In terms of assembly, heterotetramer of two alpha chains and two beta chains. As to expression, red blood cells.

Functionally, involved in oxygen transport from the lung to the various peripheral tissues. In Turdus merula (Common blackbird), this protein is Hemoglobin subunit beta (HBB).